The sequence spans 166 residues: 3-isopropylmalate dehydratase small subunit (166 aa).

The protein belongs to the LeuD family. LeuD type 2 subfamily. As to quaternary structure, heterodimer of LeuC and LeuD.

The enzyme catalyses (2R,3S)-3-isopropylmalate = (2S)-2-isopropylmalate. It functions in the pathway amino-acid biosynthesis; L-leucine biosynthesis; L-leucine from 3-methyl-2-oxobutanoate: step 2/4. Functionally, catalyzes the isomerization between 2-isopropylmalate and 3-isopropylmalate, via the formation of 2-isopropylmaleate. This chain is 3-isopropylmalate dehydratase small subunit, found in Heliobacterium modesticaldum (strain ATCC 51547 / Ice1).